The following is a 159-amino-acid chain: NADH-quinone oxidoreductase subunit I (159 aa).

2 4Fe-4S ferredoxin-type domains span residues 51–80 (RRYE…IEAD) and 90–119 (TRYD…EGPN). The [4Fe-4S] cluster site is built by C60, C63, C66, C70, C99, C102, C105, and C109.

It belongs to the complex I 23 kDa subunit family. In terms of assembly, NDH-1 is composed of 14 different subunits. Subunits NuoA, H, J, K, L, M, N constitute the membrane sector of the complex. It depends on [4Fe-4S] cluster as a cofactor.

Its subcellular location is the cell inner membrane. It catalyses the reaction a quinone + NADH + 5 H(+)(in) = a quinol + NAD(+) + 4 H(+)(out). NDH-1 shuttles electrons from NADH, via FMN and iron-sulfur (Fe-S) centers, to quinones in the respiratory chain. The immediate electron acceptor for the enzyme in this species is believed to be ubiquinone. Couples the redox reaction to proton translocation (for every two electrons transferred, four hydrogen ions are translocated across the cytoplasmic membrane), and thus conserves the redox energy in a proton gradient. The sequence is that of NADH-quinone oxidoreductase subunit I from Rickettsia peacockii (strain Rustic).